A 95-amino-acid polypeptide reads, in one-letter code: Small ribosomal subunit protein uS19 (95 aa).

Residues 76–95 are disordered; it reads PTRRFGGHADKKAATKGQVR.

The protein belongs to the universal ribosomal protein uS19 family.

Protein S19 forms a complex with S13 that binds strongly to the 16S ribosomal RNA. This Pseudothermotoga lettingae (strain ATCC BAA-301 / DSM 14385 / NBRC 107922 / TMO) (Thermotoga lettingae) protein is Small ribosomal subunit protein uS19.